A 173-amino-acid polypeptide reads, in one-letter code: Alpha-crystallin A chain (173 aa).

Met1 carries the post-translational modification N-acetylmethionine. The segment at 1–63 (MDIAIQHPWF…RTVLDSGISE (63 aa)) is required for complex formation with BFSP1 and BFSP2. A Deamidated glutamine; partial modification is found at Gln6. Phosphoserine is present on Ser45. Deamidated glutamine; partial is present on Gln50. One can recognise a sHSP domain in the interval 52 to 162 (LFRTVLDSGI…GHSERAIPVS (111 aa)). Lys70 is modified (N6-acetyllysine). Gln90 carries the post-translational modification Deamidated glutamine; partial. An N6-acetyllysine modification is found at Lys99. A Zn(2+)-binding site is contributed by His100. A Deamidated asparagine; partial modification is found at Asn101. The Zn(2+) site is built by Glu102 and His107. Ser122 carries the post-translational modification Phosphoserine. A Deamidated asparagine; partial modification is found at Asn123. The segment at 144-173 (PKVPSGLDAGHSERAIPVSREEKPSSAPSS) is disordered. Residues 153 to 167 (GHSERAIPVSREEKP) show a composition bias toward basic and acidic residues. His154 contributes to the Zn(2+) binding site. Ser162 carries an O-linked (GlcNAc) serine glycan.

This sequence belongs to the small heat shock protein (HSP20) family. Heteromer composed of three CRYAA and one CRYAB subunits. Inter-subunit bridging via zinc ions enhances stability, which is crucial as there is no protein turn over in the lens. Can also form homodimers and homotetramers (dimers of dimers) which serve as the building blocks of homooligomers. Within homooligomers, the zinc-binding motif is created from residues of 3 different molecules. His-100 and Glu-102 from one molecule are ligands of the zinc ion, and His-107 and His-154 residues from additional molecules complete the site with tetrahedral coordination geometry. Part of a complex required for lens intermediate filament formation composed of BFSP1, BFSP2 and CRYAA. Acetylation at Lys-70 may increase chaperone activity. In terms of processing, undergoes age-dependent proteolytical cleavage at the C-terminus.

The protein localises to the cytoplasm. Its subcellular location is the nucleus. Functionally, contributes to the transparency and refractive index of the lens. Acts as a chaperone, preventing aggregation of various proteins under a wide range of stress conditions. Required for the correct formation of lens intermediate filaments as part of a complex composed of BFSP1, BFSP2 and CRYAA. This chain is Alpha-crystallin A chain (CRYAA), found in Tapirus indicus (Asiatic tapir).